We begin with the raw amino-acid sequence, 123 residues long: Large ribosomal subunit protein bL12 (123 aa).

This sequence belongs to the bacterial ribosomal protein bL12 family. As to quaternary structure, homodimer. Part of the ribosomal stalk of the 50S ribosomal subunit. Forms a multimeric L10(L12)X complex, where L10 forms an elongated spine to which 2 to 4 L12 dimers bind in a sequential fashion. Binds GTP-bound translation factors.

Its function is as follows. Forms part of the ribosomal stalk which helps the ribosome interact with GTP-bound translation factors. Is thus essential for accurate translation. This chain is Large ribosomal subunit protein bL12, found in Shewanella sp. (strain MR-4).